A 40-amino-acid chain; its full sequence is Alpha-conotoxin-like Qc1.1c (40 aa).

The propeptide occupies 1 to 19 (SDGRNTAANDKASNLMALR). Disulfide bonds link C22–C28 and C23–C36. The tract at residues 24–26 (PNP) is lacks the Ser-Xaa-Pro motif that is crucial for potent interaction with nAChR.

This sequence belongs to the conotoxin A superfamily. As to expression, expressed by the venom duct.

The protein localises to the secreted. In terms of biological role, alpha-conotoxins act on postsynaptic membranes, they bind to the nicotinic acetylcholine receptors (nAChR) and thus inhibit them. Has possibly a distinct nAChR binding mode from other alpha-conotoxins, due to a different three residue motif (lacks the Ser-Xaa-Pro motif). This is Alpha-conotoxin-like Qc1.1c from Conus quercinus (Oak cone).